Here is a 378-residue protein sequence, read N- to C-terminus: MAQQAPTMQIDNLLAQVKVLGSSLNVADRAKVQKSLLDALSHVETPYEHMLRLSGSLACIRFGADIGLFKALVESQEPLTCSYLGEKLNANANILGRILRLLASARLVKQTGLDTFTAEKITQELAAQAMESGAHLLFDIHNRTYQALPDYLCENKSKDVDNMHNGIFQKAFSTDLSCYEYLVHNPKLQGFMQDAMKLNQTEGDWLSVLPMEDEIKRWQASDPDRVLFVDIGGGMGHQCIRLRGKYSDIPGRVVLQDMPITVERIPKPMPHGIEAMPYNFEEPQPIKNAKFYYTRNVLHGLTDSASIAALKNVAAAMGTESLLVIDDLIIPDEGACTQACQLDFVMMASIAGKKRTRDQWEDKRKYNEYKCKRNSQFL.

S-adenosyl-L-methionine is bound by residues 232–233 (GG), Asp257, 279–280 (NF), and Arg295. Catalysis depends on His299, which acts as the Proton acceptor.

The protein belongs to the class I-like SAM-binding methyltransferase superfamily. Cation-independent O-methyltransferase family.

Its pathway is secondary metabolite biosynthesis; terpenoid biosynthesis. O-methyltransferase; part of the gene cluster that mediates the biosynthesis of diterpenoid pyrones. The first step of the pathway is the synthesis of the alpha-pyrone moiety by the polyketide synthase dpfgA via condensation of one acetyl-CoA starter unit with 3 malonyl-CoA units and 2 methylations. The alpha-pyrone is then combined with geranylgeranyl pyrophosphate (GGPP) formed by the GGPP synthase dpfgD through the action of the prenyltransferase dpfgC to yield a linear alpha-pyrone diterpenoid. Subsequent steps in the diterpenoid pyrone biosynthetic pathway involve the decalin core formation, which is initiated by the epoxidation of the C10-C11 olefin by the FAD-dependent oxidoreductase dpfgE, and is followed by a cyclization cascade catalyzed by the terpene cyclase dpfgB. The short chain dehydrogenase/reductase dpfgG then oxidizes the 8S hydroxy group to a ketone and the short chain dehydrogenase/reductase dpfgH reduces the ketone to the 8R hydroxy group to yield higginsianin B. Higginsianin B is further methylated by the methyltransferase dpfgI to produce the intermediate named FDDP B. The cytochrome P450 monooxygenase dfgpJ then catalyzes a three-step oxidation at C-27 to generate a carboxylic acid as well as C-26 hydroxylation. Finally, methyltransferase dpfgK methylates the carboxylic acid generated by dpfgJ, yielding the final diterpenoid pyrones from the pathway which were named FDDP D and FDDP E. This is O-methyltransferase dpfgI from Gibberella zeae (strain ATCC MYA-4620 / CBS 123657 / FGSC 9075 / NRRL 31084 / PH-1) (Wheat head blight fungus).